A 1025-amino-acid chain; its full sequence is Dihydropyrimidine dehydrogenase [NADP(+)] (1025 aa).

Residues 1-3 constitute a propeptide that is removed on maturation; that stretch reads MAP. The 32-residue stretch at 69 to 100 folds into the 4Fe-4S ferredoxin-type 1 domain; the sequence is ERGALREAMRCLKCADAPCQKSCPTHLDIKSF. [4Fe-4S] cluster-binding residues include C79, C82, C87, and C91. V129 contacts FAD. [4Fe-4S] cluster-binding residues include C130, C136, C140, and Q156. Residues 194 to 198, 218 to 226, R235, and L261 contribute to the FAD site; these read GAGPA and EKQEYVGGL. NADP(+) is bound by residues 340–343, 364–365, and R371; these read AGDT and RK. An N6-acetyllysine modification is found at K384. NADP(+) contacts are provided by residues 437 to 439 and 481 to 487; these read AFG and DIVGMAN. 480–489 contributes to the FAD binding site; sequence GDIVGMANTT. FMN is bound by residues S550 and 574–575; that span reads KT. Substrate contacts are provided by residues N609 and 668 to 670; that span reads NLS. Residue C671 is the Proton acceptor of the active site. K709 is a binding site for FMN. Residue 736–737 coordinates substrate; sequence NT. Residues G767, 793 to 795, and 816 to 817 contribute to the FMN site; these read TGG and CS. 4Fe-4S ferredoxin-type domains are found at residues 944–976 and 978–1007; these read VVAV…FDPE and HLPT…MVSR. [4Fe-4S] cluster-binding residues include C953, C956, C959, C963, C986, C989, C992, and C996.

The protein belongs to the dihydropyrimidine dehydrogenase family. As to quaternary structure, homodimer. FAD serves as cofactor. It depends on FMN as a cofactor. The cofactor is [4Fe-4S] cluster.

The protein resides in the cytoplasm. It carries out the reaction 5,6-dihydrouracil + NADP(+) = uracil + NADPH + H(+). The enzyme catalyses 5,6-dihydrothymine + NADP(+) = thymine + NADPH + H(+). The protein operates within amino-acid biosynthesis; beta-alanine biosynthesis. With respect to regulation, inactivated by 5-iodouracil. In terms of biological role, involved in pyrimidine base degradation. Catalyzes the reduction of uracil and thymine. This is Dihydropyrimidine dehydrogenase [NADP(+)] (DPYD) from Sus scrofa (Pig).